A 374-amino-acid polypeptide reads, in one-letter code: uncharacterized protein (374 aa).

Residues 1-46 (MVNEEEKDLTAEGDSNNTGVSPDSIKNKTLDFYPKEKTTERKTRSR) are disordered. Basic and acidic residues predominate over residues 25-46 (IKNKTLDFYPKEKTTERKTRSR). The next 6 membrane-spanning stretches (helical) occupy residues 70–90 (YAYIIFAAFLGMASYDYFIAA), 127–147 (WVFYFVFNIPLFIFGVIKIGI), 153–173 (TIVYIGLQNGFHFAFAYIPVI), 199–219 (IWLFVFAAVAGILNGIAYGLV), 242–262 (ISIANYNRIVNYIIIVVMLAI), and 312–332 (YFFGPALFASYLFVVVQAITI).

This sequence to M.genitalium MG432 and MG443.

Its subcellular location is the cell membrane. This is an uncharacterized protein from Spiroplasma citri.